The primary structure comprises 80 residues: Acyl carrier protein (80 aa).

Residues 3–78 enclose the Carrier domain; sequence DDTFSRIQSI…QVLEYIEAES (76 aa). S38 is modified (O-(pantetheine 4'-phosphoryl)serine).

The protein belongs to the acyl carrier protein (ACP) family. 4'-phosphopantetheine is transferred from CoA to a specific serine of apo-ACP by AcpS. This modification is essential for activity because fatty acids are bound in thioester linkage to the sulfhydryl of the prosthetic group.

The protein resides in the plastid. It is found in the chloroplast. Its pathway is lipid metabolism; fatty acid biosynthesis. In terms of biological role, carrier of the growing fatty acid chain in fatty acid biosynthesis. This chain is Acyl carrier protein, found in Trieres chinensis (Marine centric diatom).